A 115-amino-acid chain; its full sequence is UPF0212 protein MJ0068 (115 aa).

Belongs to the UPF0212 family.

In Methanocaldococcus jannaschii (strain ATCC 43067 / DSM 2661 / JAL-1 / JCM 10045 / NBRC 100440) (Methanococcus jannaschii), this protein is UPF0212 protein MJ0068.